Reading from the N-terminus, the 443-residue chain is Dynein regulatory complex protein 9 (443 aa).

2 disordered regions span residues 1–34 (MEEDSLEDSNLPPKVWHSEMTVSVTGEPPSTVEE) and 415–443 (GFKMPKDKVDSKDSKGKGKGKDKRRGKKK). One can recognise an IQ domain in the interval 393 to 422 (ELKSVIKLQAWWRGTMIRREIGGFKMPKDK). Basic and acidic residues predominate over residues 415 to 430 (GFKMPKDKVDSKDSKG). Over residues 431–443 (KGKGKDKRRGKKK) the composition is skewed to basic residues.

Belongs to the DRC9 family. As to quaternary structure, component of the nexin-dynein regulatory complex (N-DRC). Interacts (via IQ domain) with CALM when calcium levels are low. Does not interact with CALM in the presence of Ca(2+). Interacts with the HSP70 proteins HSPA1L and HSPA8. May form a complex with CAMK4 and HSP70.

Its subcellular location is the cytoplasm. It is found in the cell projection. The protein resides in the cilium. It localises to the flagellum. The protein localises to the cytoskeleton. Its subcellular location is the flagellum axoneme. Its function is as follows. Component of the nexin-dynein regulatory complex (N-DRC), a key regulator of ciliary/flagellar motility which maintains the alignment and integrity of the distal axoneme and regulates microtubule sliding in motile axonemes. Binds calmodulin when cellular Ca(2+) levels are low and thereby contributes to the regulation of calcium and calmodulin-dependent protein kinase IV (CAMK4) activity; contributes to the regulation of CAMK4 signaling cascades. Required for normal axoneme assembly in sperm flagella, normal sperm tail formation and for male fertility. The chain is Dynein regulatory complex protein 9 (IQCG) from Homo sapiens (Human).